Reading from the N-terminus, the 445-residue chain is MITLRKLPLAVAVAAGVMSAQAMAVDFHGYARSGIGWTGSGGEQQCFQTTGAQSKYRLGNECETYAELKLGQEVWKEGDKSFYFDTNVAYSVAQQNDWEATDPAFREANVQGKNLIEWLPGSTIWAGKRFYQRHDVHMIDFYYWDISGPGAGLENIDVGFGKLSLAATRSSEAGGSSSFASNNIYDYTNETANDVFDVRLAQMEINPGGTLELGVDYGRANLRDNYRLVDGASKDGWLFTAEHTQSVLKGFNKFVVQYATDSMTSQGKGLSQGSGVAFDNEKFAYNINNNGHMLRILDHGAISMGDNWDMMYVGMYQDINWDNDNGTKWWTVGIRPMYKWTPIMSTVMEIGYDNVESQRTGDKNNQYKITLAQQWQAGDSIWSRPAIRVFATYAKWDEKWGYDYNGDSKVNPNYGKAVPADFNGGSFGRGDSDEWTFGAQMEIWW.

Positions Met-1 to Ala-24 are cleaved as a signal peptide.

This sequence belongs to the porin LamB (TC 1.B.3) family. In terms of assembly, homotrimer formed of three 18-stranded antiparallel beta-barrels, containing three independent channels.

It is found in the cell outer membrane. The enzyme catalyses beta-maltose(in) = beta-maltose(out). Its function is as follows. Involved in the transport of maltose and maltodextrins. The protein is Maltoporin of Shigella flexneri.